Here is a 599-residue protein sequence, read N- to C-terminus: Elongation factor 4 (599 aa).

The region spanning 2-184 (KNIRNFSIIA…RLVRDIPPPE (183 aa)) is the tr-type G domain. GTP is bound by residues 14-19 (DHGKST) and 131-134 (NKID).

This sequence belongs to the TRAFAC class translation factor GTPase superfamily. Classic translation factor GTPase family. LepA subfamily.

It localises to the cell inner membrane. The enzyme catalyses GTP + H2O = GDP + phosphate + H(+). Required for accurate and efficient protein synthesis under certain stress conditions. May act as a fidelity factor of the translation reaction, by catalyzing a one-codon backward translocation of tRNAs on improperly translocated ribosomes. Back-translocation proceeds from a post-translocation (POST) complex to a pre-translocation (PRE) complex, thus giving elongation factor G a second chance to translocate the tRNAs correctly. Binds to ribosomes in a GTP-dependent manner. The protein is Elongation factor 4 of Klebsiella pneumoniae (strain 342).